We begin with the raw amino-acid sequence, 427 residues long: 3-phosphoshikimate 1-carboxyvinyltransferase (427 aa).

Residues K22, S23, and R27 each coordinate 3-phosphoshikimate. K22 provides a ligand contact to phosphoenolpyruvate. 2 residues coordinate phosphoenolpyruvate: G96 and R124. 3-phosphoshikimate-binding residues include S169, S170, Q171, S197, D313, N336, and K340. Q171 provides a ligand contact to phosphoenolpyruvate. The Proton acceptor role is filled by D313. Phosphoenolpyruvate contacts are provided by R344, R386, and K411.

It belongs to the EPSP synthase family. As to quaternary structure, monomer.

The protein resides in the cytoplasm. It catalyses the reaction 3-phosphoshikimate + phosphoenolpyruvate = 5-O-(1-carboxyvinyl)-3-phosphoshikimate + phosphate. It participates in metabolic intermediate biosynthesis; chorismate biosynthesis; chorismate from D-erythrose 4-phosphate and phosphoenolpyruvate: step 6/7. Functionally, catalyzes the transfer of the enolpyruvyl moiety of phosphoenolpyruvate (PEP) to the 5-hydroxyl of shikimate-3-phosphate (S3P) to produce enolpyruvyl shikimate-3-phosphate and inorganic phosphate. The chain is 3-phosphoshikimate 1-carboxyvinyltransferase from Enterobacter sp. (strain 638).